The primary structure comprises 345 residues: Protein RecA (345 aa).

81–88 contacts ATP; the sequence is GPESSGKT.

The protein belongs to the RecA family.

The protein localises to the cytoplasm. Can catalyze the hydrolysis of ATP in the presence of single-stranded DNA, the ATP-dependent uptake of single-stranded DNA by duplex DNA, and the ATP-dependent hybridization of homologous single-stranded DNAs. It interacts with LexA causing its activation and leading to its autocatalytic cleavage. The protein is Protein RecA of Mycoplasma mycoides.